A 122-amino-acid polypeptide reads, in one-letter code: Ribosomal protein eL22-like (122 aa).

Phosphoserine is present on residues Ser112, Ser118, and Ser120.

The protein belongs to the eukaryotic ribosomal protein eL22 family.

This chain is Ribosomal protein eL22-like (RPL22L1), found in Bos taurus (Bovine).